The sequence spans 46 residues: uncharacterized protein (46 aa).

This is an uncharacterized protein from Bacillus subtilis (strain 168).